A 333-amino-acid chain; its full sequence is Adenosine deaminase (333 aa).

Zn(2+)-binding residues include H12 and H14. Substrate-binding residues include H14, D16, and G170. H197 contacts Zn(2+). The Proton donor role is filled by E200. D278 lines the Zn(2+) pocket. D279 is a binding site for substrate.

This sequence belongs to the metallo-dependent hydrolases superfamily. Adenosine and AMP deaminases family. Adenosine deaminase subfamily. Requires Zn(2+) as cofactor.

It carries out the reaction adenosine + H2O + H(+) = inosine + NH4(+). It catalyses the reaction 2'-deoxyadenosine + H2O + H(+) = 2'-deoxyinosine + NH4(+). In terms of biological role, catalyzes the hydrolytic deamination of adenosine and 2-deoxyadenosine. The polypeptide is Adenosine deaminase (Edwardsiella ictaluri (strain 93-146)).